Here is a 471-residue protein sequence, read N- to C-terminus: Anthocyanidin 3-O-glucosyltransferase (471 aa).

The active-site Proton acceptor is the His-24. His-24 is an an anthocyanidin binding site. Residue Asp-130 is the Charge relay of the active site. Thr-152 is a UDP-alpha-D-glucose binding site. His-161 is a binding site for an anthocyanidin. UDP-alpha-D-glucose-binding residues include Ala-352, Gln-354, His-369, Trp-372, Ser-374, and Glu-377. Gly-392 contributes to the an anthocyanidin binding site. 2 residues coordinate UDP-alpha-D-glucose: Asp-393 and Gln-394.

Belongs to the UDP-glycosyltransferase family.

It catalyses the reaction an anthocyanidin + UDP-alpha-D-glucose + H(+) = an anthocyanidin 3-O-beta-D-glucoside + UDP. Its pathway is pigment biosynthesis; anthocyanin biosynthesis. Its function is as follows. In the presence of other necessary color factors, this glycosylation reaction allows the accumulation of anthocyanin pigments. This is Anthocyanidin 3-O-glucosyltransferase (BZ1) from Zea mays (Maize).